The chain runs to 595 residues: Elongation factor 4 (595 aa).

Residues 2 to 183 (KNIRNFCIIA…AIVEQVPAPA (182 aa)) enclose the tr-type G domain. Residues 14-19 (DHGKST) and 130-133 (NKVD) each bind GTP.

It belongs to the TRAFAC class translation factor GTPase superfamily. Classic translation factor GTPase family. LepA subfamily.

It is found in the cell inner membrane. The enzyme catalyses GTP + H2O = GDP + phosphate + H(+). Functionally, required for accurate and efficient protein synthesis under certain stress conditions. May act as a fidelity factor of the translation reaction, by catalyzing a one-codon backward translocation of tRNAs on improperly translocated ribosomes. Back-translocation proceeds from a post-translocation (POST) complex to a pre-translocation (PRE) complex, thus giving elongation factor G a second chance to translocate the tRNAs correctly. Binds to ribosomes in a GTP-dependent manner. The chain is Elongation factor 4 from Porphyromonas gingivalis (strain ATCC BAA-308 / W83).